Here is a 188-residue protein sequence, read N- to C-terminus: Elongation factor P (188 aa).

It belongs to the elongation factor P family.

The protein resides in the cytoplasm. Its pathway is protein biosynthesis; polypeptide chain elongation. Its function is as follows. Involved in peptide bond synthesis. Stimulates efficient translation and peptide-bond synthesis on native or reconstituted 70S ribosomes in vitro. Probably functions indirectly by altering the affinity of the ribosome for aminoacyl-tRNA, thus increasing their reactivity as acceptors for peptidyl transferase. The polypeptide is Elongation factor P (Methylorubrum populi (strain ATCC BAA-705 / NCIMB 13946 / BJ001) (Methylobacterium populi)).